Here is a 619-residue protein sequence, read N- to C-terminus: E3 ubiquitin-protein ligase complex SLX5-SLX8 subunit SLX5 (619 aa).

The disordered stretch occupies residues 1-23; it reads MHSDTNGRTKSNNSPSDNNPNET. Residues 11-21 are compositionally biased toward low complexity; the sequence is SNNSPSDNNPN. Ser14 and Ser29 each carry phosphoserine. Positions 63 to 90 are disordered; that stretch reads VRSDSRSRNSQRTHITASSERPDFQANN. Residues 70-90 show a composition bias toward polar residues; it reads RNSQRTHITASSERPDFQANN. The EUC1 interaction domain stretch occupies residues 201–335; that stretch reads SRRQLLRRSA…ALFTEFRNQL (135 aa).

In terms of assembly, component of the heterodimeric SUMO-targeted ubiquitin ligase (STUbL) complex composed of SLX5 and SLX8. Interacts with sirtuin SIR2. Interacts with KAR9. Interacts with EUC1.

The protein localises to the nucleus. The protein resides in the chromosome. It is found in the centromere. Its subcellular location is the kinetochore. The enzyme catalyses S-ubiquitinyl-[E2 ubiquitin-conjugating enzyme]-L-cysteine + [acceptor protein]-L-lysine = [E2 ubiquitin-conjugating enzyme]-L-cysteine + N(6)-ubiquitinyl-[acceptor protein]-L-lysine.. It participates in protein modification; protein ubiquitination. Functionally, component of the SUMO-targeted ubiquitin ligase (STUbL) complex SLX5/SLX8 that mediates ubiquitination and subsequent desumoylation of sumoylated proteins and proteins containing SUMO-like domains for their degradation. The STUbL complex SLX5/SLX8 stimulates ubiquitin conjugating enzymes, including UBC1, UBC4, UBC5 and UBC13-MMS2, and mediates the proteolytic down-regulation of sumoylated proteins. The STUbL complex SLX5/SLX8 is involved in ubiquitin-mediated degradation of histone variant CSE4, preventing mislocalization to euchromatin. The complex plays an essential role in maintenance of chromosome stability and links SUMO-dependent ubiquitination to a centromere-specific function during mitosis. The complex is involved in proteolysis of spindle positioning protein KAR9 and ensures correct spindle function by regulating levels of microtubule-associated proteins. During replication, the complex helps prevent DNA lesions via recombination and has a role in localizing the DNA damage protein DCD2. The complex especially ubiquitinates the nuclease YEN1 and prevents persistent accumulation of a fraction of YEN1 associated with sites of activity in late G2/M and helps maintain the balance between pro- and anti-crossover pathways during homologous recombination. It is also involved in ubiquitin-mediated degradation of DNA repair proteins RAD52 and RAD57. Along with SIR2, promotes silencing of genes at telomeric or ribosomal DNA (rDNA) loci. Finally, the complex is recruited to distinct genomic hotspots of non-H2B protein ubiquitination (ub-hotspots) by the sumoylated transcription factor-like protein EUC1 where it ubiquitinates EUC1 and presumably other targets. The chain is E3 ubiquitin-protein ligase complex SLX5-SLX8 subunit SLX5 (SLX5) from Saccharomyces cerevisiae (strain ATCC 204508 / S288c) (Baker's yeast).